The chain runs to 206 residues: Transcription factor MYB57 (206 aa).

Positions 1–11 (METTMKKKGRV) are enriched in basic residues. The interval 1 to 20 (METTMKKKGRVKATITSQKE) is disordered. 2 consecutive HTH myb-type domains span residues 22–74 (EGTV…LNYL) and 75–129 (RPDV…QRHM). DNA-binding regions (H-T-H motif) lie at residues 50-74 (WNSV…LNYL) and 102-125 (WSKI…RTKI). The interval 138–162 (NHQHHCSGNSQSSGMTTQGSSGKAI) is disordered. A compositionally biased stretch (low complexity) spans 144–159 (SGNSQSSGMTTQGSSG).

Expressed specifically in flowers.

The protein localises to the nucleus. Functionally, transcription factor acting redundantly with MYB21 and MYB24 to control stamen filament elongation in the late developed flowers. Repressed at the transcript levels by DELLA proteins. The polypeptide is Transcription factor MYB57 (MYB57) (Arabidopsis thaliana (Mouse-ear cress)).